Consider the following 174-residue polypeptide: Frataxin homolog, mitochondrial (174 aa).

The N-terminal 21 residues, 1 to 21 (MIKRSLASLVRVSSVMGRRYM), are a transit peptide targeting the mitochondrion.

The protein belongs to the frataxin family. Monomer. Forms a 24-mer complex made up of 8 copies of a trimeric subcomplex. Increments in mitochondrial iron uptake induce stepwise assembly of species ranging from trimers to 24-mers. Interacts with ISU1 with a 1 to 1 stoichiometry; the interaction is direct. Interacts with YHB1, SDH1, SDH2, AIM45 and CIR1. Processed in two steps by mitochondrial processing peptidase (MPP). MPP first cleaves the precursor to intermediate form and subsequently converts the intermediate to mature size protein.

Its subcellular location is the mitochondrion matrix. The catalysed reaction is 4 Fe(2+) + O2 + 4 H(+) = 4 Fe(3+) + 2 H2O. Promotes the biosynthesis of heme as well as the assembly and repair of iron-sulfur clusters by delivering Fe(2+) to proteins involved in these pathways. Plays a role in the protection against iron-catalyzed oxidative stress through its ability to catalyze the oxidation of Fe(2+) to Fe(3+). Can store large amounts of the metal in the form of a ferrihydrite mineral by oligomerization. May be involved in regulation of the mitochondrial electron transport chain. The protein is Frataxin homolog, mitochondrial of Saccharomyces cerevisiae (strain ATCC 204508 / S288c) (Baker's yeast).